Reading from the N-terminus, the 202-residue chain is Sterile alpha motif domain-containing protein 10 (202 aa).

Positions 118–184 (WSQQDVCKWL…LQQVLRLQVR (67 aa)) constitute an SAM domain.

The chain is Sterile alpha motif domain-containing protein 10 (SAMD10) from Homo sapiens (Human).